Reading from the N-terminus, the 1037-residue chain is Probable serine/threonine-protein kinase KCC4 (1037 aa).

The 265-residue stretch at 21-285 (WKLGETLGFG…IRDILSHPLL (265 aa)) folds into the Protein kinase domain. ATP is bound by residues 27–35 (LGFGSTGKV) and K50. D152 acts as the Proton acceptor in catalysis. Residues 372-387 (NKKNRNKIKKTKKNKR) show a composition bias toward basic residues. The segment at 372–494 (NKKNRNKIKK…MPNTKRSSLT (123 aa)) is disordered. A compositionally biased stretch (low complexity) spans 388 to 404 (SSTLSSSSSLLLNNRSI). S396 is modified (phosphoserine). Residues 408–427 (PRRRTSKRHSREFSSSRKRS) show a composition bias toward basic residues. Positions 453-465 (NVASANTQATPSG) are enriched in polar residues. Basic residues predominate over residues 469 to 480 (PHKRNSKKRSSK). A compositionally biased stretch (low complexity) spans 481 to 494 (RLSYMPNTKRSSLT). Residues S675, S707, S777, S822, S825, and S871 each carry the phosphoserine modification. Disordered regions lie at residues 746–804 (LIKE…DFPQ), 810–829 (QEYD…KSAE), and 861–918 (TLPS…TVKK). The segment covering 861–873 (TLPSLTSNNSSVG) has biased composition (polar residues). The span at 879–888 (GAEKGTESEK) shows a compositional bias: basic and acidic residues.

Belongs to the protein kinase superfamily. CAMK Ser/Thr protein kinase family. NIM1 subfamily. Interacts with septin proteins, primarily with CDC11. Interacts with SWE1 and NAP1.

It is found in the bud neck. The catalysed reaction is L-seryl-[protein] + ATP = O-phospho-L-seryl-[protein] + ADP + H(+). It catalyses the reaction L-threonyl-[protein] + ATP = O-phospho-L-threonyl-[protein] + ADP + H(+). Involved in regulation of bud growth during cell cycle and in septin organization. Plays a role in cell wall synthesis. The polypeptide is Probable serine/threonine-protein kinase KCC4 (KCC4) (Saccharomyces cerevisiae (strain ATCC 204508 / S288c) (Baker's yeast)).